The sequence spans 91 residues: Probable Fe(2+)-trafficking protein (91 aa).

Belongs to the Fe(2+)-trafficking protein family.

In terms of biological role, could be a mediator in iron transactions between iron acquisition and iron-requiring processes, such as synthesis and/or repair of Fe-S clusters in biosynthetic enzymes. The protein is Probable Fe(2+)-trafficking protein of Paraburkholderia phymatum (strain DSM 17167 / CIP 108236 / LMG 21445 / STM815) (Burkholderia phymatum).